A 307-amino-acid polypeptide reads, in one-letter code: Ornithine carbamoyltransferase (307 aa).

Residues 55-58 (STRT), Q82, R106, and 133-136 (HPCQ) contribute to the carbamoyl phosphate site. Residues N164, D224, and 228 to 229 (SM) contribute to the L-ornithine site. Residues 263 to 264 (CL) and R291 each bind carbamoyl phosphate.

The protein belongs to the aspartate/ornithine carbamoyltransferase superfamily. OTCase family.

The protein localises to the cytoplasm. It catalyses the reaction carbamoyl phosphate + L-ornithine = L-citrulline + phosphate + H(+). It functions in the pathway amino-acid biosynthesis; L-arginine biosynthesis; L-arginine from L-ornithine and carbamoyl phosphate: step 1/3. Functionally, reversibly catalyzes the transfer of the carbamoyl group from carbamoyl phosphate (CP) to the N(epsilon) atom of ornithine (ORN) to produce L-citrulline. The chain is Ornithine carbamoyltransferase from Bradyrhizobium diazoefficiens (strain JCM 10833 / BCRC 13528 / IAM 13628 / NBRC 14792 / USDA 110).